A 201-amino-acid chain; its full sequence is Glycerol-3-phosphate acyltransferase (201 aa).

The next 5 helical transmembrane spans lie at 3–23 (LFAI…SAIL), 53–73 (WVAL…VWLG), 80–100 (HFEL…PIFF), 115–135 (IAPI…LIFF), and 153–175 (FYVW…LLIY).

It belongs to the PlsY family. Probably interacts with PlsX.

The protein localises to the cell inner membrane. The enzyme catalyses an acyl phosphate + sn-glycerol 3-phosphate = a 1-acyl-sn-glycero-3-phosphate + phosphate. It participates in lipid metabolism; phospholipid metabolism. In terms of biological role, catalyzes the transfer of an acyl group from acyl-phosphate (acyl-PO(4)) to glycerol-3-phosphate (G3P) to form lysophosphatidic acid (LPA). This enzyme utilizes acyl-phosphate as fatty acyl donor, but not acyl-CoA or acyl-ACP. In Pasteurella multocida (strain Pm70), this protein is Glycerol-3-phosphate acyltransferase.